The chain runs to 160 residues: Phosphopantetheine adenylyltransferase (160 aa).

Residue Ser10 participates in substrate binding. ATP contacts are provided by residues 10–11 (SF) and His18. Substrate-binding residues include Lys42, Thr74, and Arg88. ATP is bound by residues 89 to 91 (GLR), Glu99, and 124 to 130 (FYYISSR).

The protein belongs to the bacterial CoaD family. Homohexamer. Requires Mg(2+) as cofactor.

Its subcellular location is the cytoplasm. The enzyme catalyses (R)-4'-phosphopantetheine + ATP + H(+) = 3'-dephospho-CoA + diphosphate. It functions in the pathway cofactor biosynthesis; coenzyme A biosynthesis; CoA from (R)-pantothenate: step 4/5. In terms of biological role, reversibly transfers an adenylyl group from ATP to 4'-phosphopantetheine, yielding dephospho-CoA (dPCoA) and pyrophosphate. The polypeptide is Phosphopantetheine adenylyltransferase (Bdellovibrio bacteriovorus (strain ATCC 15356 / DSM 50701 / NCIMB 9529 / HD100)).